The primary structure comprises 38 residues: Large ribosomal subunit protein bL36 (38 aa).

Belongs to the bacterial ribosomal protein bL36 family.

This is Large ribosomal subunit protein bL36 from Kosmotoga olearia (strain ATCC BAA-1733 / DSM 21960 / TBF 19.5.1).